The following is a 350-amino-acid chain: MSESNNTPLLLRAARGEKVERTPVWMMRQAGRYMKIYRDLREKYPSFRERSENPDLAIEISLQPWHAFQPDGVIMFSDILTPLPGMGIPFDIIESKGPIIENPIRTQAQVDAMTPFDPAESLPFIKTILGTLRQEVGNASTVLGFVGAPWTLAAYAIEGKSSKNYAIIKNMAFSEPAVLHSFLGKIADAIADYVCYQIECGAQVIQMFDSWAGQLSPQDYDMFALPYQKRVVDKVKAKYPDFPLILYISGSAGVLERMGKSGVDIVSVDWTVDMADARQRLGKDMKVQGNIDPGVLFGSQDFIKARIIDTVRKAGNWGHILNLGHGVLVGTPEDNVRFFFETCKNVQSFL.

Residues 28-32 (RQAGR), D78, Y155, S210, and H325 each bind substrate.

The protein belongs to the uroporphyrinogen decarboxylase family. As to quaternary structure, homodimer.

It is found in the cytoplasm. It catalyses the reaction uroporphyrinogen III + 4 H(+) = coproporphyrinogen III + 4 CO2. It functions in the pathway porphyrin-containing compound metabolism; protoporphyrin-IX biosynthesis; coproporphyrinogen-III from 5-aminolevulinate: step 4/4. Its function is as follows. Catalyzes the decarboxylation of four acetate groups of uroporphyrinogen-III to yield coproporphyrinogen-III. This is Uroporphyrinogen decarboxylase from Picosynechococcus sp. (strain ATCC 27264 / PCC 7002 / PR-6) (Agmenellum quadruplicatum).